The sequence spans 406 residues: 4-hydroxy-3-methylbut-2-en-1-yl diphosphate synthase (flavodoxin) (406 aa).

4 residues coordinate [4Fe-4S] cluster: Cys297, Cys300, Cys343, and Glu350.

It belongs to the IspG family. It depends on [4Fe-4S] cluster as a cofactor.

The enzyme catalyses (2E)-4-hydroxy-3-methylbut-2-enyl diphosphate + oxidized [flavodoxin] + H2O + 2 H(+) = 2-C-methyl-D-erythritol 2,4-cyclic diphosphate + reduced [flavodoxin]. Its pathway is isoprenoid biosynthesis; isopentenyl diphosphate biosynthesis via DXP pathway; isopentenyl diphosphate from 1-deoxy-D-xylulose 5-phosphate: step 5/6. Functionally, converts 2C-methyl-D-erythritol 2,4-cyclodiphosphate (ME-2,4cPP) into 1-hydroxy-2-methyl-2-(E)-butenyl 4-diphosphate. The protein is 4-hydroxy-3-methylbut-2-en-1-yl diphosphate synthase (flavodoxin) of Thermus thermophilus (strain ATCC 27634 / DSM 579 / HB8).